The primary structure comprises 620 residues: Cryptochrome-1 (620 aa).

In terms of domain architecture, Photolyase/cryptochrome alpha/beta spans 3 to 132; that stretch reads VNAVHWFRKG…EVIVRISHTL (130 aa). Short sequence motifs (LIR) lie at residues 50 to 54, 82 to 87, and 151 to 156; these read NRWRF, DVFPRL, and KRFQTL. Ser252 is an FAD binding site. 4 short sequence motifs (LIR) span residues 255 to 260, 271 to 276, 285 to 290, and 335 to 339; these read LRFGCL, DLYKKV, SLYGQL, and TGFPW. Gln289 is a binding site for FAD. His355 serves as a coordination point for FAD. Residues 379 to 384 carry the LIR 8 motif; that stretch reads KVFEEL. Position 387 to 389 (387 to 389) interacts with FAD; it reads DAD. 5 short sequence motifs (LIR) span residues 395 to 400, 411 to 416, 430 to 435, 486 to 491, and 492 to 497; these read GSWMWL, HCYCPV, RRYLPV, QIYQQL, and SRYRGL. The tract at residues 592–620 is disordered; it reads GTGISAGKRPNPEEETQSVGPKVQRQSTN.

Belongs to the DNA photolyase class-1 family. In terms of assembly, component of the circadian core oscillator, which includes the CRY proteins, CLOCK or NPAS2, BMAL1 or BMAL2, CSNK1E, and the PER proteins. Requires FAD as cofactor. (6R)-5,10-methylene-5,6,7,8-tetrahydrofolate is required as a cofactor. As to expression, expressed in the retina. High levels found in ganglion cells of the retina.

The protein localises to the cytoplasm. Its subcellular location is the nucleus. In terms of biological role, transcriptional repressor which forms a core component of the circadian clock. The circadian clock, an internal time-keeping system, regulates various physiological processes through the generation of approximately 24 hour circadian rhythms in gene expression, which are translated into rhythms in metabolism and behavior. It is derived from the Latin roots 'circa' (about) and 'diem' (day) and acts as an important regulator of a wide array of physiological functions including metabolism, sleep, body temperature, blood pressure, endocrine, immune, cardiovascular, and renal function. Consists of two major components: the central clock, residing in the suprachiasmatic nucleus (SCN) of the brain, and the peripheral clocks that are present in nearly every tissue and organ system. Both the central and peripheral clocks can be reset by environmental cues, also known as Zeitgebers (German for 'timegivers'). The predominant Zeitgeber for the central clock is light, which is sensed by retina and signals directly to the SCN. The central clock entrains the peripheral clocks through neuronal and hormonal signals, body temperature and feeding-related cues, aligning all clocks with the external light/dark cycle. Circadian rhythms allow an organism to achieve temporal homeostasis with its environment at the molecular level by regulating gene expression to create a peak of protein expression once every 24 hours to control when a particular physiological process is most active with respect to the solar day. Transcription and translation of core clock components (CLOCK, NPAS2, BMAL1, BMAL2, PER1, PER2, PER3, CRY1 and CRY2) plays a critical role in rhythm generation, whereas delays imposed by post-translational modifications (PTMs) are important for determining the period (tau) of the rhythms (tau refers to the period of a rhythm and is the length, in time, of one complete cycle). A diurnal rhythm is synchronized with the day/night cycle, while the ultradian and infradian rhythms have a period shorter and longer than 24 hours, respectively. Disruptions in the circadian rhythms contribute to the pathology of cardiovascular diseases, cancer, metabolic syndromes and aging. A transcription/translation feedback loop (TTFL) forms the core of the molecular circadian clock mechanism. Transcription factors, CLOCK or NPAS2 and BMAL1 or BMAL2, form the positive limb of the feedback loop, act in the form of a heterodimer and activate the transcription of core clock genes and clock-controlled genes (involved in key metabolic processes), harboring E-box elements (5'-CACGTG-3') within their promoters. The core clock genes: PER1/2/3 and CRY1/2 which are transcriptional repressors form the negative limb of the feedback loop and interact with the CLOCK|NPAS2-BMAL1|BMAL2 heterodimer inhibiting its activity and thereby negatively regulating their own expression. This heterodimer also activates nuclear receptors NR1D1, NR1D2, RORA, RORB and RORG, which form a second feedback loop and which activate and repress BMAL1 transcription, respectively. CRY1 and CRY2 have redundant functions but also differential and selective contributions at least in defining the pace of the SCN circadian clock and its circadian transcriptional outputs. More potent transcriptional repressor in cerebellum and liver than CRY2, though more effective in lengthening the period of the SCN oscillator. On its side, CRY2 seems to play a critical role in tuning SCN circadian period by opposing the action of CRY1. With CRY2, is dispensable for circadian rhythm generation but necessary for the development of intercellular networks for rhythm synchrony. Capable of translocating circadian clock core proteins such as PER proteins to the nucleus. Interacts with CLOCK:BMAL1 independently of PER proteins and is found at CLOCK:BMAL1-bound sites, suggesting that CRY may act as a molecular gatekeeper to maintain CLOCK:BMAL1 in a poised and repressed state until the proper time for transcriptional activation. In Sylvia borin (Garden warbler), this protein is Cryptochrome-1 (CRY1).